A 177-amino-acid chain; its full sequence is CASP-like protein 5A2 (177 aa).

Topologically, residues 1–36 are cytoplasmic; that stretch reads MNASHPAVHPVGVPPAVAGQLPPRMRMKEIQGMPGT. The helical transmembrane segment at 37–57 threads the bilayer; the sequence is IGGLLLRLGQFCFALVAFSIM. At 58–68 the chain is on the extracellular side; sequence VSIENFSTVTA. Asn-62 carries N-linked (GlcNAc...) asparagine glycosylation. Residues 69-89 traverse the membrane as a helical segment; sequence FCYLVAATVLQCLWSLALAII. The Cytoplasmic portion of the chain corresponds to 90–103; the sequence is DGYALLVKRSLRNS. The helical transmembrane segment at 104 to 124 threads the bilayer; the sequence is LLVSLLVVGDGVTATLTFAAA. At 125-153 the chain is on the extracellular side; that stretch reads CASAGITVLIGNDLRQCKENHCARYETAT. A helical membrane pass occupies residues 154–174; that stretch reads ALAFLSWFMVSLSFILTFWLL. Residues 175-177 lie on the Cytoplasmic side of the membrane; the sequence is ATR.

It belongs to the Casparian strip membrane proteins (CASP) family. As to quaternary structure, homodimer and heterodimers.

The protein resides in the cell membrane. The protein is CASP-like protein 5A2 of Ginkgo biloba (Ginkgo).